An 81-amino-acid chain; its full sequence is Cell division protein ZapB (81 aa).

Residues 5–81 are a coiled coil; sequence LEVFEKLESK…QALLGRMEEV (77 aa). Positions 43–64 are disordered; sequence VHSAQNGREELERENQQLREQQ. Over residues 49–59 the composition is skewed to basic and acidic residues; the sequence is GREELERENQQ.

The protein belongs to the ZapB family. Homodimer. The ends of the coiled-coil dimer bind to each other, forming polymers. Interacts with FtsZ.

The protein resides in the cytoplasm. Functionally, non-essential, abundant cell division factor that is required for proper Z-ring formation. It is recruited early to the divisome by direct interaction with FtsZ, stimulating Z-ring assembly and thereby promoting cell division earlier in the cell cycle. Its recruitment to the Z-ring requires functional FtsA or ZipA. The polypeptide is Cell division protein ZapB (Enterobacter sp. (strain 638)).